We begin with the raw amino-acid sequence, 105 residues long: Chloroacetanilide N-alkylformylase 2, ferredoxin component (105 aa).

A 2Fe-2S ferredoxin-type domain is found at 2-105; it reads PKLVVVTREG…GLTVTIAPED (104 aa). [2Fe-2S] cluster-binding residues include Cys40, Cys46, Cys49, and Cys86.

Belongs to the adrenodoxin/putidaredoxin family. As to quaternary structure, the chloroacetanilide N-alkylformylase multicomponent enzyme system is composed of an oxygenase component (CndA) and an electron transfer component formed by a ferredoxin reductase (CndC1) and a ferredoxin (CndB1). In vitro, chloroacetanilide N-alkylformylase assays in which CndB1 is substituted for CndB2 demonstrate that the two enzymes possess nearly identical activities. [2Fe-2S] cluster serves as cofactor.

In terms of biological role, component of the chloroacetanilide N-alkylformylase multicomponent enzyme system involved in the degradation of chloroacetanilide herbicides (N-alkoxyalkyl-N-chloroacetyl-substituted aniline derivatives). In vitro, functions as an intermediate electron transfer protein. The sequence is that of Chloroacetanilide N-alkylformylase 2, ferredoxin component from Rhizorhabdus wittichii (strain DC-6 / KACC 16600) (Sphingomonas wittichii).